We begin with the raw amino-acid sequence, 229 residues long: Molybdenum transport system permease protein ModB (229 aa).

Residues 1–16 (MILTDPEWQAVLLSLK) lie on the Periplasmic side of the membrane. Positions 11–219 (VLLSLKVSSL…MISLLISEWL (209 aa)) constitute an ABC transmembrane type-1 domain. A helical membrane pass occupies residues 17–37 (VSSLAVLFSLPFGIFFAWLLV). The Cytoplasmic segment spans residues 38–49 (RCTFPGKALLDS). Residues 50–70 (VLHLPLVLPPVVVGYLLLVSM) form a helical membrane-spanning segment. The Periplasmic portion of the chain corresponds to 71–83 (GRRGFIGERLYDW). The chain crosses the membrane as a helical span at residues 84–104 (FGITFAFSWRGAVLAAAVMSF). Over 105–136 (PLMVRAIRLALEGVDVKLEQAARTLGAGRWRV) the chain is Cytoplasmic. The chain crosses the membrane as a helical span at residues 137-157 (FFTITLPLTLPGIIVGTVLAF). Residues 158–201 (ARSLGEFGATITFVSNIPGETRTIPSAMYTLIQTPGGESGAARL) lie on the Periplasmic side of the membrane. Residues 202–222 (CIISIALAMISLLISEWLARI) traverse the membrane as a helical segment. Over 223–229 (SRERAGR) the chain is Cytoplasmic.

This sequence belongs to the binding-protein-dependent transport system permease family. CysTW subfamily.

It localises to the cell inner membrane. Functionally, part of the binding-protein-dependent transport system for molybdenum; probably responsible for the translocation of the substrate across the membrane. The chain is Molybdenum transport system permease protein ModB (modB) from Escherichia coli O157:H7.